Here is a 100-residue protein sequence, read N- to C-terminus: Aspartyl/glutamyl-tRNA(Asn/Gln) amidotransferase subunit C (100 aa).

The protein belongs to the GatC family. Heterotrimer of A, B and C subunits.

It carries out the reaction L-glutamyl-tRNA(Gln) + L-glutamine + ATP + H2O = L-glutaminyl-tRNA(Gln) + L-glutamate + ADP + phosphate + H(+). The enzyme catalyses L-aspartyl-tRNA(Asn) + L-glutamine + ATP + H2O = L-asparaginyl-tRNA(Asn) + L-glutamate + ADP + phosphate + 2 H(+). Allows the formation of correctly charged Asn-tRNA(Asn) or Gln-tRNA(Gln) through the transamidation of misacylated Asp-tRNA(Asn) or Glu-tRNA(Gln) in organisms which lack either or both of asparaginyl-tRNA or glutaminyl-tRNA synthetases. The reaction takes place in the presence of glutamine and ATP through an activated phospho-Asp-tRNA(Asn) or phospho-Glu-tRNA(Gln). In Rickettsia felis (strain ATCC VR-1525 / URRWXCal2) (Rickettsia azadi), this protein is Aspartyl/glutamyl-tRNA(Asn/Gln) amidotransferase subunit C.